A 149-amino-acid chain; its full sequence is Calmodulin (149 aa).

Position 2 is an N-acetylalanine (A2). EF-hand domains lie at E8–N43, P44–D79, D81–K116, and L117–K149. Ca(2+) contacts are provided by D21, D23, D25, T27, E32, D57, D59, N61, T63, E68, D94, D96, N98, and E105. An N6,N6,N6-trimethyllysine modification is found at K116. D130, D132, D134, Q136, and E141 together coordinate Ca(2+).

It belongs to the calmodulin family.

Functionally, calmodulin mediates the control of a large number of enzymes, ion channels and other proteins by Ca(2+). Among the enzymes to be stimulated by the calmodulin-Ca(2+) complex are a number of protein kinases and phosphatases. This Metridium senile (Brown sea anemone) protein is Calmodulin.